The following is a 338-amino-acid chain: Lipoate-protein ligase A (338 aa).

A BPL/LPL catalytic domain is found at 29–216; the sequence is PATQRVLFLW…AFFAHYGERV (188 aa). ATP is bound by residues Arg71, 76–79, and Lys134; that span reads GAVF. Lys134 contributes to the (R)-lipoate binding site.

This sequence belongs to the LplA family. As to quaternary structure, monomer.

It is found in the cytoplasm. The enzyme catalyses L-lysyl-[lipoyl-carrier protein] + (R)-lipoate + ATP = N(6)-[(R)-lipoyl]-L-lysyl-[lipoyl-carrier protein] + AMP + diphosphate + H(+). It participates in protein modification; protein lipoylation via exogenous pathway; protein N(6)-(lipoyl)lysine from lipoate: step 1/2. It functions in the pathway protein modification; protein lipoylation via exogenous pathway; protein N(6)-(lipoyl)lysine from lipoate: step 2/2. In terms of biological role, catalyzes both the ATP-dependent activation of exogenously supplied lipoate to lipoyl-AMP and the transfer of the activated lipoyl onto the lipoyl domains of lipoate-dependent enzymes. This chain is Lipoate-protein ligase A, found in Salmonella agona (strain SL483).